The primary structure comprises 312 residues: Methionyl-tRNA formyltransferase (312 aa).

A (6S)-5,6,7,8-tetrahydrofolate-binding site is contributed by 109–112 (SLLP).

Belongs to the Fmt family.

The catalysed reaction is L-methionyl-tRNA(fMet) + (6R)-10-formyltetrahydrofolate = N-formyl-L-methionyl-tRNA(fMet) + (6S)-5,6,7,8-tetrahydrofolate + H(+). Attaches a formyl group to the free amino group of methionyl-tRNA(fMet). The formyl group appears to play a dual role in the initiator identity of N-formylmethionyl-tRNA by promoting its recognition by IF2 and preventing the misappropriation of this tRNA by the elongation apparatus. This chain is Methionyl-tRNA formyltransferase, found in Listeria monocytogenes serotype 4b (strain CLIP80459).